The following is a 360-amino-acid chain: Sensor histidine kinase LiaS (360 aa).

Residues 1–15 (MRKKMLASLQWRAIR) lie on the Cytoplasmic side of the membrane. A helical transmembrane segment spans residues 16-36 (MTTGISLLLFVCLISFMMFYY). Topologically, residues 37–47 (RLDPLVLLSSS) are extracellular. Residues 48–68 (WFGIPFILILLLISVTVGFAS) traverse the membrane as a helical segment. Residues 69-360 (GYMYGNRLKT…ENERDSSIID (292 aa)) are Cytoplasmic-facing. In terms of domain architecture, HAMP spans 74–126 (NRLKTRIDTLIESILTFENGNFAYRIPPLGDDEIGLAADQLNEMAKRVELQVA). The region spanning 153-346 (RLARDLHDAV…QIEVKVPIFP (194 aa)) is the Histidine kinase domain. The residue at position 159 (His-159) is a Phosphohistidine; by autocatalysis.

The protein resides in the cell membrane. It carries out the reaction ATP + protein L-histidine = ADP + protein N-phospho-L-histidine.. Member of the two-component regulatory system LiaS/LiaR probably involved in response to a subset of cell wall-active antibiotics that interfere with the lipid II cycle in the cytoplasmic membrane (bacitracin, nisin, ramoplanin and vancomycin). Also seems to be involved in response to cationic antimicrobial peptides and secretion stress. Activates probably LiaR by phosphorylation. This chain is Sensor histidine kinase LiaS (liaS), found in Bacillus subtilis (strain 168).